We begin with the raw amino-acid sequence, 358 residues long: tRNA-specific 2-thiouridylase MnmA 2 (358 aa).

ATP contacts are provided by residues 11 to 18 (GMSGGVDS) and methionine 37. Catalysis depends on cysteine 106, which acts as the Nucleophile. Cysteine 106 and cysteine 202 are oxidised to a cystine. Glycine 130 lines the ATP pocket. An interaction with tRNA region spans residues 152 to 154 (KDQ). Cysteine 202 serves as the catalytic Cysteine persulfide intermediate. Positions 308–309 (RY) are interaction with tRNA.

The protein belongs to the MnmA/TRMU family.

The protein localises to the cytoplasm. It catalyses the reaction S-sulfanyl-L-cysteinyl-[protein] + uridine(34) in tRNA + AH2 + ATP = 2-thiouridine(34) in tRNA + L-cysteinyl-[protein] + A + AMP + diphosphate + H(+). Its function is as follows. Catalyzes the 2-thiolation of uridine at the wobble position (U34) of tRNA, leading to the formation of s(2)U34. The chain is tRNA-specific 2-thiouridylase MnmA 2 from Clostridium tetani (strain Massachusetts / E88).